A 177-amino-acid polypeptide reads, in one-letter code: Peptide methionine sulfoxide reductase MsrA (177 aa).

Cys11 is an active-site residue.

Belongs to the MsrA Met sulfoxide reductase family.

The catalysed reaction is L-methionyl-[protein] + [thioredoxin]-disulfide + H2O = L-methionyl-(S)-S-oxide-[protein] + [thioredoxin]-dithiol. It carries out the reaction [thioredoxin]-disulfide + L-methionine + H2O = L-methionine (S)-S-oxide + [thioredoxin]-dithiol. Functionally, has an important function as a repair enzyme for proteins that have been inactivated by oxidation. Catalyzes the reversible oxidation-reduction of methionine sulfoxide in proteins to methionine. This is Peptide methionine sulfoxide reductase MsrA from Picrophilus torridus (strain ATCC 700027 / DSM 9790 / JCM 10055 / NBRC 100828 / KAW 2/3).